A 311-amino-acid polypeptide reads, in one-letter code: Large ribosomal subunit protein uL18 (311 aa).

It belongs to the universal ribosomal protein uL18 family. Component of the large ribosomal subunit (LSU).

It is found in the cytoplasm. The protein localises to the nucleus. Functionally, component of the ribosome, a large ribonucleoprotein complex responsible for the synthesis of proteins in the cell. The small ribosomal subunit (SSU) binds messenger RNAs (mRNAs) and translates the encoded message by selecting cognate aminoacyl-transfer RNA (tRNA) molecules. The large subunit (LSU) contains the ribosomal catalytic site termed the peptidyl transferase center (PTC), which catalyzes the formation of peptide bonds, thereby polymerizing the amino acids delivered by tRNAs into a polypeptide chain. The nascent polypeptides leave the ribosome through a tunnel in the LSU and interact with protein factors that function in enzymatic processing, targeting, and the membrane insertion of nascent chains at the exit of the ribosomal tunnel. In Eimeria tenella (Coccidian parasite), this protein is Large ribosomal subunit protein uL18 (RPL5).